A 181-amino-acid polypeptide reads, in one-letter code: TATA-box-binding protein C (181 aa).

A run of 2 repeats spans residues 5-83 and 99-177.

This sequence belongs to the TBP family.

In terms of biological role, general factor that plays a role in the activation of archaeal genes transcribed by RNA polymerase. Binds specifically to the TATA box promoter element which lies close to the position of transcription initiation. The polypeptide is TATA-box-binding protein C (tbpC1) (Halobacterium salinarum (strain ATCC 700922 / JCM 11081 / NRC-1) (Halobacterium halobium)).